Here is a 275-residue protein sequence, read N- to C-terminus: 3-methyl-2-oxobutanoate hydroxymethyltransferase (275 aa).

Asp-49 and Asp-88 together coordinate Mg(2+). 3-methyl-2-oxobutanoate is bound by residues 49–50, Asp-88, and Lys-118; that span reads DS. Glu-120 provides a ligand contact to Mg(2+). Residue Glu-187 is the Proton acceptor of the active site.

It belongs to the PanB family. Homodecamer; pentamer of dimers. Requires Mg(2+) as cofactor.

It localises to the cytoplasm. The catalysed reaction is 3-methyl-2-oxobutanoate + (6R)-5,10-methylene-5,6,7,8-tetrahydrofolate + H2O = 2-dehydropantoate + (6S)-5,6,7,8-tetrahydrofolate. Its pathway is cofactor biosynthesis; (R)-pantothenate biosynthesis; (R)-pantoate from 3-methyl-2-oxobutanoate: step 1/2. In terms of biological role, catalyzes the reversible reaction in which hydroxymethyl group from 5,10-methylenetetrahydrofolate is transferred onto alpha-ketoisovalerate to form ketopantoate. The protein is 3-methyl-2-oxobutanoate hydroxymethyltransferase of Bartonella quintana (strain Toulouse) (Rochalimaea quintana).